Here is a 2524-residue protein sequence, read N- to C-terminus: MDRIGLAVLLCSLPVLTQGLRCTQTAEMCLNGGRCEMTPGGTGVCLCGNLYFGERCQFPNPCTIKNQCMNFGTCEPVLQGNAIDFICHCPVGFTDKVCLTPVDNACVNNPCRNGGTCELLNSVTEYKCRCPPGWTGDSCQQADPCASNPCANGGKCLPFEIQYICKCPPGFHGATCKQDINECSQNPCKNGGQCINEFGSYRCTCQNRFTGRNCDEPYVPCNPSPCLNGGTCRQTDDTSYDCTCLPGFSGQNCEENIDDCPSNNCRNGGTCVDGVNTYNCQCPPDWTGQYCTEDVDECQLMPNACQNGGTCHNTYGGYNCVCVNGWTGEDCSENIDDCANAACHSGATCHDRVASFYCECPHGRTGLLCHLDNACISNPCNEGSNCDTNPVNGKAICTCPPGYTGPACNNDVDECSLGANPCEHGGRCTNTLGSFQCNCPQGYAGPRCEIDVNECLSNPCQNDSTCLDQIGEFQCICMPGYEGLYCETNIDECASNPCLHNGKCIDKINEFRCDCPTGFSGNLCQHDFDECTSTPCKNGAKCLDGPNSYTCQCTEGFTGRHCEQDINECIPDPCHYGTCKDGIATFTCLCRPGYTGRLCDNDINECLSKPCLNGGQCTDRENGYICTCPKGTTGVNCETKIDDCASNLCDNGKCIDKIDGYECTCEPGYTGKLCNININECDSNPCRNGGTCKDQINGFTCVCPDGYHDHMCLSEVNECNSNPCIHGACHDGVNGYKCDCEAGWSGSNCDINNNECESNPCMNGGTCKDMTGAYICTCKAGFSGPNCQTNINECSSNPCLNHGTCIDDVAGYKCNCMLPYTGAICEAVLAPCAGSPCKNGGRCKESEDFETFSCECPPGWQGQTCEIDMNECVNRPCRNGATCQNTNGSYKCNCKPGYTGRNCEMDIDDCQPNPCHNGGSCSDGINMFFCNCPAGFRGPKCEEDINECASNPCKNGANCTDCVNSYTCTCQPGFSGIHCESNTPDCTESSCFNGGTCIDGINTFTCQCPPGFTGSYCQHDINECDSKPCLNGGTCQDSYGTYKCTCPQGYTGLNCQNLVRWCDSSPCKNGGKCWQTNNFYRCECKSGWTGVYCDVPSVSCEVAAKQQGVDIVHLCRNSGMCVDTGNTHFCRCQAGYTGSYCEEQVDECSPNPCQNGATCTDYLGGYSCECVAGYHGVNCSEEINECLSHPCQNGGTCIDLINTYKCSCPRGTQGVHCEINVDDCTPFYDSFTLEPKCFNNGKCIDRVGGYNCICPPGFVGERCEGDVNECLSNPCDSRGTQNCIQLVNDYRCECRQGFTGRRCESVVDGCKGMPCRNGGTCAVASNTERGFICKCPPGFDGATCEYDSRTCSNLRCQNGGTCISVLTSSKCVCSEGYTGATCQYPVISPCASHPCYNGGTCQFFAEEPFFQCFCPKNFNGLFCHILDYEFPGGLGKNITPPDNDDICENEQCSELADNKVCNANCNNHACGWDGGDCSLNFNDPWKNCTQSLQCWKYFNDGKCDSQCNNTGCLYDGFDCQKVEVQCNPLYDQYCKDHFQDGHCDQGCNNAECEWDGLDCANMPENLAEGTLVLVVLMPPERLKNNSVNFLRELSRVLHTNVVFKKDSKGEYKIYPYYGNEEELKKHHIKRSTDYWSDAPSAIFSTMKESILLGRHRRELDEMEVRGSIVYLEIDNRQCYKSSSQCFNSATDVAAFLGALASLGSLDTLSYKIEAVKSENMETPKPSTLYPMLSMLVIPLLIIFVFMMVIVNKKRRREHGQLWFPDGFIPKEPSKKKRRDRLGEDSVGLKPIKNMTDGSFMDDNQNEWGDEETLENKRFRFEEQVILPELVDDKTDPRQWTRQHLDAADLRISSMAPTPPQGEIEADCMDVNVRGPDGFTPLMIASCSGGGLETGNSEEEEDASANMISDFIGQGAQLHNQTDRTGETALHLAARYARADAAKRLLESSADANVQDNMGRTPLHAAVAADAQGVFQILIRNRATDLDARMFDGTTPLILAARLAVEGMVEELINAHADVNAVDEFGKSALHWAAAVNNVDAAAVLLKNSANKDMQNNKEETSLFLAAREGSYETAKVLLDHYANRDITDHMDRLPRDIAQERMHHDIVHLLDEYNLVKSPTLHNGPLGATTLSPPICSPNGYMGNMKPSVQSKKARKPSIKGNGCKEAKELKARRKKSQDGKTTLLDSGSSGVLSPVDSLESTHGYLSDVSSPPLMTSPFQQSPSMPLNHLTSMPESQLGMNHINMATKQEMAAGSNRMAFDAMVPRLTHLNASSPNTIMSNGSMHFTVGGAPTMNSQCDWLARLQNGMVQNQYDPIRNGIQQGNAQQAQALQHGLMTSLHNGLPATTLSQMMTYQAMPNTRLANQPHLMQAQQMQQQQNLQLHQSMQQQHHNSSTTSTHINSPFCSSDISQTDLQQMSSNNIHSVMPQDTQIFAASLPSNLTQSMTTAQFLTPPSQHSYSSPMDNTPSHQLQVPDHPFLTPSPESPDQWSSSSPHSNMSDWSEGISSPPTSMQPQRTHIPEAFK.

The N-terminal stretch at 1 to 19 (MDRIGLAVLLCSLPVLTQG) is a signal peptide. EGF-like domains are found at residues 20 to 57 (LRCT…ERCQ), 58 to 99 (FPNP…KVCL), 102 to 140 (VDNA…DSCQ), and 141 to 177 (QADP…ATCK). Over 20 to 1729 (LRCTQTAEMC…METPKPSTLY (1710 aa)) the chain is Extracellular. 33 cysteine pairs are disulfide-bonded: Cys22–Cys35, Cys29–Cys45, Cys47–Cys56, Cys62–Cys74, Cys68–Cys87, Cys89–Cys98, Cys106–Cys117, Cys111–Cys128, Cys130–Cys139, Cys145–Cys156, Cys150–Cys165, Cys167–Cys176, Cys183–Cys194, Cys188–Cys203, Cys205–Cys214, Cys221–Cys232, Cys226–Cys242, Cys244–Cys253, Cys260–Cys271, Cys265–Cys280, Cys282–Cys291, Cys298–Cys311, Cys305–Cys320, Cys322–Cys331, Cys338–Cys349, Cys343–Cys358, Cys360–Cys369, Cys375–Cys386, Cys380–Cys397, Cys399–Cys408, Cys415–Cys428, Cys422–Cys437, and Cys439–Cys448. The EGF-like 5; calcium-binding domain occupies 179-215 (DINECSQNPCKNGGQCINEFGSYRCTCQNRFTGRNCD). The 38-residue stretch at 217-254 (PYVPCNPSPCLNGGTCRQTDDTSYDCTCLPGFSGQNCE) folds into the EGF-like 6 domain. Residue Thr231 is glycosylated (O-linked (Fuc...) threonine; alternate). Residue Thr231 is glycosylated (O-linked (GalNAc...) threonine; alternate). The 37-residue stretch at 256–292 (NIDDCPSNNCRNGGTCVDGVNTYNCQCPPDWTGQYCT) folds into the EGF-like 7; calcium-binding domain. The region spanning 294 to 332 (DVDECQLMPNACQNGGTCHNTYGGYNCVCVNGWTGEDCS) is the EGF-like 8; calcium-binding domain. Residues 334–370 (NIDDCANAACHSGATCHDRVASFYCECPHGRTGLLCH) form the EGF-like 9; calcium-binding domain. The region spanning 371-409 (LDNACISNPCNEGSNCDTNPVNGKAICTCPPGYTGPACN) is the EGF-like 10 domain. In terms of domain architecture, EGF-like 11; calcium-binding spans 411–449 (DVDECSLGANPCEHGGRCTNTLGSFQCNCPQGYAGPRCE). Ca(2+) contacts are provided by Thr431 and Ser434. Ser434 is a glycosylation site (O-linked (Glc...) serine). Positions 451, 452, and 454 each coordinate Ca(2+). The EGF-like 12; calcium-binding domain maps to 451 to 487 (DVNECLSNPCQNDSTCLDQIGEFQCICMPGYEGLYCE). 3 disulfides stabilise this stretch: Cys455-Cys466, Cys460-Cys475, and Cys477-Cys486. O-linked (Glc...) serine glycosylation occurs at Ser457. Asn462 carries N-linked (GlcNAc...) asparagine glycosylation. The O-linked (Fuc...) threonine glycan is linked to Thr465. Ca(2+) is bound by residues Asp468 and Gln469. 3 residues coordinate Ca(2+): Asn489, Ile490, and Glu492. The region spanning 489–525 (NIDECASNPCLHNGKCIDKINEFRCDCPTGFSGNLCQ) is the EGF-like 13; calcium-binding domain. 75 disulfide bridges follow: Cys493-Cys504, Cys498-Cys513, Cys515-Cys524, Cys531-Cys542, Cys536-Cys551, Cys553-Cys562, Cys569-Cys579, Cys574-Cys588, Cys590-Cys599, Cys606-Cys617, Cys611-Cys626, Cys628-Cys637, Cys644-Cys654, Cys649-Cys663, Cys665-Cys674, Cys681-Cys692, Cys686-Cys701, Cys703-Cys712, Cys719-Cys729, Cys724-Cys738, Cys740-Cys749, Cys756-Cys767, Cys761-Cys776, Cys778-Cys787, Cys794-Cys805, Cys799-Cys814, Cys816-Cys825, Cys832-Cys843, Cys837-Cys854, Cys856-Cys865, Cys872-Cys883, Cys877-Cys892, Cys894-Cys903, Cys910-Cys921, Cys915-Cys930, Cys932-Cys941, Cys948-Cys959, Cys953-Cys968, Cys970-Cys979, Cys986-Cys997, Cys991-Cys1006, Cys1008-Cys1017, Cys1024-Cys1035, Cys1029-Cys1044, Cys1046-Cys1055, Cys1062-Cys1073, Cys1067-Cys1082, Cys1084-Cys1093, Cys1100-Cys1121, Cys1115-Cys1130, Cys1132-Cys1141, Cys1148-Cys1159, Cys1153-Cys1168, Cys1170-Cys1179, Cys1186-Cys1197, Cys1191-Cys1206, Cys1208-Cys1217, Cys1224-Cys1243, Cys1237-Cys1252, Cys1254-Cys1263, Cys1270-Cys1283, Cys1275-Cys1292, Cys1294-Cys1303, Cys1310-Cys1321, Cys1315-Cys1333, Cys1335-Cys1344, Cys1351-Cys1362, Cys1356-Cys1371, Cys1373-Cys1382, Cys1390-Cys1401, Cys1395-Cys1412, Cys1414-Cys1423, Cys1447-Cys1470, Cys1452-Cys1465, and Cys1461-Cys1477. Residue Ser495 is glycosylated (O-linked (Glc...) serine). Ca(2+)-binding residues include Asp506 and Lys507. One can recognise an EGF-like 14; calcium-binding domain in the interval 527–563 (DFDECTSTPCKNGAKCLDGPNSYTCQCTEGFTGRHCE). The region spanning 565–600 (DINECIPDPCHYGTCKDGIATFTCLCRPGYTGRLCD) is the EGF-like 15; calcium-binding domain. Residues 602-638 (DINECLSKPCLNGGQCTDRENGYICTCPKGTTGVNCE) enclose the EGF-like 16; calcium-binding domain. Residues 640 to 675 (KIDDCASNLCDNGKCIDKIDGYECTCEPGYTGKLCN) enclose the EGF-like 17 domain. The 37-residue stretch at 677–713 (NINECDSNPCRNGGTCKDQINGFTCVCPDGYHDHMCL) folds into the EGF-like 18; calcium-binding domain. One can recognise an EGF-like 19; calcium-binding domain in the interval 715-750 (EVNECNSNPCIHGACHDGVNGYKCDCEAGWSGSNCD). Positions 752–788 (NNNECESNPCMNGGTCKDMTGAYICTCKAGFSGPNCQ) constitute an EGF-like 20; calcium-binding domain. The 37-residue stretch at 790–826 (NINECSSNPCLNHGTCIDDVAGYKCNCMLPYTGAICE) folds into the EGF-like 21; calcium-binding domain. Residues 828–866 (VLAPCAGSPCKNGGRCKESEDFETFSCECPPGWQGQTCE) enclose the EGF-like 22 domain. Residues 868-904 (DMNECVNRPCRNGATCQNTNGSYKCNCKPGYTGRNCE) enclose the EGF-like 23; calcium-binding domain. N-linked (GlcNAc...) asparagine glycosylation is present at Asn887. An EGF-like 24; calcium-binding domain is found at 906 to 942 (DIDDCQPNPCHNGGSCSDGINMFFCNCPAGFRGPKCE). The EGF-like 25; calcium-binding domain maps to 944–980 (DINECASNPCKNGANCTDCVNSYTCTCQPGFSGIHCE). N-linked (GlcNAc...) asparagine glycosylation occurs at Asn958. In terms of domain architecture, EGF-like 26 spans 982–1018 (NTPDCTESSCFNGGTCIDGINTFTCQCPPGFTGSYCQ). The region spanning 1020-1056 (DINECDSKPCLNGGTCQDSYGTYKCTCPQGYTGLNCQ) is the EGF-like 27; calcium-binding domain. EGF-like domains follow at residues 1058–1094 (LVRW…VYCD) and 1096–1142 (PSVS…SYCE). The EGF-like 30; calcium-binding domain occupies 1144-1180 (QVDECSPNPCQNGATCTDYLGGYSCECVAGYHGVNCS). The N-linked (GlcNAc...) asparagine glycan is linked to Asn1178. Residues 1182–1218 (EINECLSHPCQNGGTCIDLINTYKCSCPRGTQGVHCE) enclose the EGF-like 31; calcium-binding domain. Residues 1220 to 1264 (NVDDCTPFYDSFTLEPKCFNNGKCIDRVGGYNCICPPGFVGERCE) enclose the EGF-like 32; calcium-binding domain. 4 consecutive EGF-like domains span residues 1266 to 1304 (DVNE…RRCE), 1306 to 1346 (VVDG…TCEY), 1347 to 1383 (DSRT…ATCQ), and 1386 to 1424 (VISP…LFCH). A glycan (O-linked (Fuc...) threonine; alternate) is linked at Thr1400. Thr1400 is a glycosylation site (O-linked (GalNAc...) threonine; alternate). LNR repeat units lie at residues 1447–1487 (CENE…PWKN), 1488–1529 (CTQS…CNPL), and 1530–1564 (YDQY…NMPE). An N-linked (GlcNAc...) asparagine glycan is attached at Asn1487. 5 disulfide bridges follow: Cys1488–Cys1512, Cys1494–Cys1507, Cys1503–Cys1519, Cys1534–Cys1547, and Cys1543–Cys1559. Asn1508 carries N-linked (GlcNAc...) asparagine glycosylation. N-linked (GlcNAc...) asparagine glycosylation is present at Asn1584. The helical transmembrane segment at 1730–1750 (PMLSMLVIPLLIIFVFMMVIV) threads the bilayer. Over 1751–2524 (NKKRRREHGQ…QRTHIPEAFK (774 aa)) the chain is Cytoplasmic. ANK repeat units follow at residues 1876 to 1919 (DGFT…QLHN), 1924 to 1953 (TGET…DANV), 1957 to 1987 (MGRT…DLDA), 1991 to 2020 (DGTT…DVNA), 2024 to 2053 (FGKS…NKDM), and 2057 to 2086 (KEET…NRDI). Disordered regions lie at residues 2144 to 2230 (NMKP…LNHL), 2369 to 2407 (MQAQ…FCSS), and 2451 to 2524 (LTPP…EAFK). Polar residues-rich tracts occupy residues 2180-2192 (GKTT…SSGV) and 2208-2230 (DVSS…LNHL). Residues 2369 to 2394 (MQAQQMQQQQNLQLHQSMQQQHHNSS) show a composition bias toward low complexity. 2 stretches are compositionally biased toward polar residues: residues 2395–2407 (TTST…FCSS) and 2451–2471 (LTPP…SHQL). Positions 2481–2496 (PSPESPDQWSSSSPHS) are enriched in low complexity. The segment covering 2497–2516 (NMSDWSEGISSPPTSMQPQR) has biased composition (polar residues).

Belongs to the NOTCH family. In terms of assembly, forms a ternary complex with nrarp and rbpj/suh. In terms of processing, O-glycosylated on the EGF-like domains. Contains both O-linked fucose and O-linked glucose. O-linked glycosylation by galnt11 is involved in determination of left/right symmetry: glycosylation promotes activation of notch1, possibly by promoting cleavage by adam17, modulating the balance between motile and immotile (sensory) cilia at the left-right organiser (LRO). Synthesized in the endoplasmic reticulum as an inactive form which is proteolytically cleaved by a furin-like convertase in the trans-Golgi network before it reaches the plasma membrane to yield an active, ligand-accessible form. Cleavage results in a C-terminal fragment N(TM) and a N-terminal fragment N(EC). Following ligand binding, it is cleaved by adam17 to yield a membrane-associated intermediate fragment called notch extracellular truncation (NEXT). Following endocytosis, this fragment is then cleaved by presenilin dependent gamma-secretase to release a Notch-derived peptide containing the intracellular domain (NICD) from the membrane.

It localises to the cell membrane. The protein resides in the nucleus. Functions as a receptor for membrane-bound ligands Jagged-1 (JAG1), Jagged-2 (JAG2) and Delta-1 (DLL1) to regulate cell-fate determination. Upon ligand activation through the released notch intracellular domain (NICD) it forms a transcriptional activator complex with RBPJ/RBPSUH and activates genes of the enhancer of split locus. Affects the implementation of differentiation, proliferation and apoptotic programs. Involved in angiogenesis; negatively regulates endothelial cell proliferation and migration and angiogenic sprouting. Involved in the maturation of both CD4(+) and CD8(+) cells in the thymus. Important for follicular differentiation and possibly cell fate selection within the follicle. During cerebellar development, functions as a receptor for neuronal DNER and is involved in the differentiation of Bergmann glia. Represses neuronal and myogenic differentiation. May play an essential role in postimplantation development, probably in some aspect of cell specification and/or differentiation. May be involved in mesoderm development, somite formation and neurogenesis. Involved in determination of left/right symmetry by modulating the balance between motile and immotile (sensory) cilia at the left-right organiser (LRO). The polypeptide is Neurogenic locus notch homolog protein 1 (notch1) (Xenopus laevis (African clawed frog)).